Reading from the N-terminus, the 110-residue chain is Large ribosomal subunit protein uL22 (110 aa).

The protein belongs to the universal ribosomal protein uL22 family. As to quaternary structure, part of the 50S ribosomal subunit.

In terms of biological role, this protein binds specifically to 23S rRNA; its binding is stimulated by other ribosomal proteins, e.g. L4, L17, and L20. It is important during the early stages of 50S assembly. It makes multiple contacts with different domains of the 23S rRNA in the assembled 50S subunit and ribosome. The globular domain of the protein is located near the polypeptide exit tunnel on the outside of the subunit, while an extended beta-hairpin is found that lines the wall of the exit tunnel in the center of the 70S ribosome. In Vesicomyosocius okutanii subsp. Calyptogena okutanii (strain HA), this protein is Large ribosomal subunit protein uL22.